The sequence spans 81 residues: Large ribosomal subunit protein bL31 (81 aa).

It belongs to the bacterial ribosomal protein bL31 family. Type A subfamily. Part of the 50S ribosomal subunit.

Functionally, binds the 23S rRNA. This Fusobacterium nucleatum subsp. nucleatum (strain ATCC 25586 / DSM 15643 / BCRC 10681 / CIP 101130 / JCM 8532 / KCTC 2640 / LMG 13131 / VPI 4355) protein is Large ribosomal subunit protein bL31 (rpmE).